Here is a 633-residue protein sequence, read N- to C-terminus: Polypeptide N-acetylgalactosaminyltransferase 3 (633 aa).

At 1–19 the chain is on the cytoplasmic side; sequence MAHLKRLVKLHIKRHYHRK. The chain crosses the membrane as a helical; Signal-anchor for type II membrane protein span at residues 20 to 37; it reads FWKLGAVIFFFLVVLILM. The Lumenal segment spans residues 38–633; the sequence is QREVSVQYSK…LQKWIFSQND (596 aa). A disordered region spans residues 112-145; that stretch reads DRPPQDSNAPGASGKPFKITHLSPEEQKEKERGE. Positions 134–145 are enriched in basic and acidic residues; it reads SPEEQKEKERGE. Residues 184–293 form a catalytic subdomain A region; it reads LPTTSVIIVF…YGWLEPLLAR (110 aa). Mn(2+) contacts are provided by D277 and H279. Residue N297 is glycosylated (N-linked (GlcNAc...) asparagine). The tract at residues 356–418 is catalytic subdomain B; that stretch reads PIKTPTFAGG…PCSVVGHVFR (63 aa). Residue H415 participates in Mn(2+) binding. N-linked (GlcNAc...) asparagine glycosylation is present at N484. One can recognise a Ricin B-type lectin domain in the interval 504–630; the sequence is VISGYIKSVG…TDLLQKWIFS (127 aa). The cysteines at positions 517 and 535 are disulfide-linked. 4 residues coordinate UDP-N-acetyl-alpha-D-galactosamine: D519, E522, H536, and N541. 2 disulfides stabilise this stretch: C561/C574 and C605/C618.

The protein belongs to the glycosyltransferase 2 family. GalNAc-T subfamily. Mn(2+) serves as cofactor. Highly expressed in the reproductive tract, principally in the testis and uterus, and to a lesser degree in the cervix with only trace levels in the ovary. Also expressed at high level in sublingual gland, stomach and colon, with more moderate amounts present in the submandibular and parotid gland as well as the kidney.

It localises to the golgi apparatus. It is found in the golgi stack membrane. The enzyme catalyses L-seryl-[protein] + UDP-N-acetyl-alpha-D-galactosamine = a 3-O-[N-acetyl-alpha-D-galactosaminyl]-L-seryl-[protein] + UDP + H(+). The catalysed reaction is L-threonyl-[protein] + UDP-N-acetyl-alpha-D-galactosamine = a 3-O-[N-acetyl-alpha-D-galactosaminyl]-L-threonyl-[protein] + UDP + H(+). It participates in protein modification; protein glycosylation. Its function is as follows. Catalyzes the initial reaction in O-linked oligosaccharide biosynthesis, the transfer of an N-acetyl-D-galactosamine residue to a serine or threonine residue on the protein receptor. Has activity toward HIV envelope glycoprotein gp120. Has activity towards EA2, MUC2 and MUC5. Probably glycosylates fibronectin in vivo. Glycosylates FGF23. The sequence is that of Polypeptide N-acetylgalactosaminyltransferase 3 (Galnt3) from Mus musculus (Mouse).